Here is a 907-residue protein sequence, read N- to C-terminus: Eukaryotic translation initiation factor 4 gamma 2 (907 aa).

The residue at position 1 (Met1) is an N-acetylmethionine. Residues Met1–Lys71 form a disordered region. Ser11 is modified (phosphoserine). The MIF4G domain occupies Phe78–His308. Residue Thr89 is modified to Phosphothreonine. At Arg360 the chain carries Omega-N-methylarginine. Residue Ser395 is modified to Phosphoserine. Residue Lys431 is modified to N6-methyllysine. Residue Ser443 is modified to Phosphoserine. The tract at residues Pro498–Lys541 is disordered. Residues Pro503–Gln516 are compositionally biased toward polar residues. Arg505 carries the post-translational modification Omega-N-methylarginine. Phosphothreonine occurs at positions 508 and 514. The MI domain occupies Glu543–Glu666. Residue Lys575 forms a Glycyl lysine isopeptide (Lys-Gly) (interchain with G-Cter in SUMO2) linkage. A W2 domain is found at Glu720–Glu904. Ser902 is subject to Phosphoserine.

It belongs to the eukaryotic initiation factor 4G family. In terms of assembly, interacts with the serine/threonine protein kinases MKNK1 and MKNK2. Binds EIF4A and EIF3. Interacts with MIF4GD. Interacts with DAZAP2. Phosphorylation; hyperphosphorylated during mitosis.

Its function is as follows. Appears to play a role in the switch from cap-dependent to IRES-mediated translation during mitosis, apoptosis and viral infection. Cleaved by some caspases and viral proteases. In Oryctolagus cuniculus (Rabbit), this protein is Eukaryotic translation initiation factor 4 gamma 2.